Consider the following 603-residue polypeptide: Flavin-dependent halogenase chlA (603 aa).

Positions 16, 19, and 59 each coordinate FAD. Positions 352 and 353 each coordinate chloride.

It belongs to the flavin-dependent halogenase family.

It catalyses the reaction 2,4,6-trihydroxyphenylhexan-1-one + FADH2 + chloride + O2 = (3-chloro-2,4,6-trihydroxyphenyl)hexan-1-one + FAD + 2 H2O + H(+). The catalysed reaction is (3-chloro-2,4,6-trihydroxyphenyl)hexan-1-one + FADH2 + chloride + O2 = (3,5-dichloro-2,4,6-trihydroxyphenyl)hexan-1-one + FAD + 2 H2O. Its function is as follows. Flavin-dependent halogenase; part of the gene cluster that mediates the biosynthesis of DIF-1 (Differentiation Inducing Factor-1), a signal molecule involved in the differentiation of pstO (prestalk-O) cells. The three-step process begins with the formation of (2,4,6-trihydroxyphenyl)-1-hexan-1-one (THPH) by the polyketide synthase StlB. THPH is then dichlorinated by the flavin-dependent halogenase ChlA. The last step of DIF-1 biosynthesis is the O-methylation of dichloro-THPH (or des-methyl-DIF-1) by the methyltransferase DmtA to yield DIF-1. The polypeptide is Flavin-dependent halogenase chlA (Dictyostelium discoideum (Social amoeba)).